The following is a 188-amino-acid chain: Methylamine dehydrogenase light chain (188 aa).

Positions 1–57 form a signal peptide, tat-type signal; sequence MLGNFRFDDMVEKLSRRVAGRTSRRGAIGRLGTVLAGAALVPLLPVDRRGRVSRANA. Cystine bridges form between C80–C145, C86–C118, C93–C178, C95–C143, C103–C134, and C135–C166. Tryptophylquinone is present on W114. The segment at residues 114–165 is a cross-link (tryptophan tryptophylquinone (Trp-Trp)); that stretch reads WVASCYNPTDGQSYLIAYRDCCGYNVSGRCPCLNTEGELPVYRPEFANDIIW.

It belongs to the aromatic amine dehydrogenase light chain family. In terms of assembly, heterotetramer of two light and two heavy chains. Tryptophan tryptophylquinone residue is required as a cofactor. Predicted to be exported by the Tat system. The position of the signal peptide cleavage has been experimentally proven. Post-translationally, tryptophan tryptophylquinone (TTQ) is formed by oxidation of the indole ring of a tryptophan to form tryptophylquinone followed by covalent cross-linking with another tryptophan residue.

It localises to the periplasm. The enzyme catalyses 2 oxidized [amicyanin] + methylamine + H2O = 2 reduced [amicyanin] + formaldehyde + NH4(+) + 2 H(+). It functions in the pathway one-carbon metabolism; methylamine degradation; formaldehyde from methylamine: step 1/1. Its function is as follows. Methylamine dehydrogenase carries out the oxidation of methylamine. Electrons are passed from methylamine dehydrogenase to amicyanin. This Paracoccus versutus (Thiobacillus versutus) protein is Methylamine dehydrogenase light chain (mauA).